A 284-amino-acid chain; its full sequence is Tropomyosin (284 aa).

The stretch at 1–284 forms a coiled coil; that stretch reads MEAIKNKMQA…DQTFAELTGY (284 aa).

The protein belongs to the tropomyosin family. In terms of assembly, homodimer.

Its function is as follows. Tropomyosin, in association with the troponin complex, plays a central role in the calcium dependent regulation of muscle contraction. The sequence is that of Tropomyosin from Dermatophagoides pteronyssinus (European house dust mite).